Reading from the N-terminus, the 500-residue chain is NAD(P)H-quinone oxidoreductase chain 4, chloroplastic (500 aa).

Transmembrane regions (helical) follow at residues 4-24 (FPWLTIIVVLPIFAGSSIFFF), 35-55 (YTICICLLELLLTTYAFCYHF), 87-107 (IGPVLLTGFITTLATLAAWPV), 113-130 (LFHFLMLAMYSGQIGSFS), 134-154 (LLLFFIMWELELIPVYLLLSM), 167-187 (FILYTAGGSIFLLIGVSGMGL), 208-228 (ALEILLYFGFFIAYAVKLPII), 242-262 (HYSTCMLLAGILLKMGAYGLV), 272-292 (AHSIFSPWLMIVGTIQIIYAA), 305-325 (IAYSSVSHMGFTILGISSITD), 330-350 (GAILQMISHGFIGAALFFLAG), 386-406 (LALPGMSGFVAELVVFFGIIT), 416-436 (ILITFVTAIGMILTPIYSLSM), and 463-483 (FVSICIFLPVIGIGIYPDFVF).

The protein belongs to the complex I subunit 4 family.

It is found in the plastid. The protein resides in the chloroplast thylakoid membrane. The enzyme catalyses a plastoquinone + NADH + (n+1) H(+)(in) = a plastoquinol + NAD(+) + n H(+)(out). It carries out the reaction a plastoquinone + NADPH + (n+1) H(+)(in) = a plastoquinol + NADP(+) + n H(+)(out). The sequence is that of NAD(P)H-quinone oxidoreductase chain 4, chloroplastic from Nandina domestica (Heavenly bamboo).